The following is a 20-amino-acid chain: Antiviral protein Y3 (20 aa).

In Pleurotus citrinopileatus (Golden oyster mushroom), this protein is Antiviral protein Y3.